The following is a 1483-amino-acid chain: Dynein axonemal assembly factor 1 homolog (1483 aa).

LRR repeat units follow at residues 34 to 56 (RLND…EEYT), 57 to 78 (ELKC…EKLS), 79 to 100 (KLKC…DPCR), 101 to 122 (ELDT…GTNV), 125 to 146 (VLNT…SDLI), and 150 to 171 (TLSV…KIFE). The region spanning 185 to 223 (PVVSRLPQYRKTLILACKELTYLDSRPVFPRDRACAEAW) is the LRRCT domain. Disordered regions lie at residues 249–282 (SINC…TCAE), 300–327 (EEVS…GTSS), 945–986 (DSGD…HGTK), and 1167–1213 (SENE…SIDD). Over residues 311-327 (DGTNSSSSLEDNDGTSS) the composition is skewed to polar residues. Residues 1183 to 1196 (TNDKESSDIMEKNG) show a composition bias toward basic and acidic residues.

Belongs to the DNAAF1 family.

The protein resides in the cell projection. The protein localises to the cilium. Cilium-specific protein required for cilia structures. In Drosophila melanogaster (Fruit fly), this protein is Dynein axonemal assembly factor 1 homolog (dtr).